The sequence spans 78 residues: Large ribosomal subunit protein bL31 (78 aa).

Zn(2+)-binding residues include cysteine 16, cysteine 18, cysteine 38, and cysteine 41.

Belongs to the bacterial ribosomal protein bL31 family. Type A subfamily. As to quaternary structure, part of the 50S ribosomal subunit. The cofactor is Zn(2+).

In terms of biological role, binds the 23S rRNA. In Frankia casuarinae (strain DSM 45818 / CECT 9043 / HFP020203 / CcI3), this protein is Large ribosomal subunit protein bL31.